We begin with the raw amino-acid sequence, 159 residues long: C-type lectin 1 (159 aa).

The N-terminal stretch at 1–23 (MGRFIFISFGLLVVFFFLSGAKG) is a signal peptide. 4 disulfides stabilise this stretch: Cys-26–Cys-37, Cys-54–Cys-155, Cys-61–Cys-157, and Cys-130–Cys-147. Residues 33-156 (MYGLCYKIFD…CKVKNAFLCQ (124 aa)) enclose the C-type lectin domain. N-linked (GlcNAc...) asparagine glycosylation occurs at Asn-118. The Sugar-binding motif lies at 119-121 (LTD). Residues Asp-121, Asp-127, and Asn-143 each coordinate Ca(2+).

This sequence belongs to the true venom lectin family. As to quaternary structure, homodimer; disulfide-linked. Expressed by the venom gland.

The protein localises to the secreted. In terms of biological role, lectin which recognizes specific carbohydrate structures and agglutinates a variety of animal cells by binding to cell-surface glycoproteins and glycolipids. May be a calcium-dependent lectin. This Bitis gabonica (Gaboon adder) protein is C-type lectin 1.